The primary structure comprises 430 residues: Adenylosuccinate synthetase (430 aa).

Residues 12–18 and 40–42 contribute to the GTP site; these read GDEGKGK and GHT. D13 acts as the Proton acceptor in catalysis. 2 residues coordinate Mg(2+): D13 and G40. IMP contacts are provided by residues 13–16, 38–41, T128, R142, Q223, T238, and R302; these read DEGK and NAGH. Residue H41 is the Proton donor of the active site. A substrate-binding site is contributed by 298–304; it reads TTTGRPR. GTP is bound by residues R304, 330–332, and 412–414; these read SID and SVG.

It belongs to the adenylosuccinate synthetase family. Homodimer. The cofactor is Mg(2+).

It localises to the cytoplasm. The catalysed reaction is IMP + L-aspartate + GTP = N(6)-(1,2-dicarboxyethyl)-AMP + GDP + phosphate + 2 H(+). The protein operates within purine metabolism; AMP biosynthesis via de novo pathway; AMP from IMP: step 1/2. Its function is as follows. Plays an important role in the de novo pathway of purine nucleotide biosynthesis. Catalyzes the first committed step in the biosynthesis of AMP from IMP. This is Adenylosuccinate synthetase from Streptococcus equi subsp. zooepidemicus (strain H70).